A 257-amino-acid polypeptide reads, in one-letter code: 3-deoxy-manno-octulosonate cytidylyltransferase (257 aa).

Belongs to the KdsB family.

It localises to the cytoplasm. It carries out the reaction 3-deoxy-alpha-D-manno-oct-2-ulosonate + CTP = CMP-3-deoxy-beta-D-manno-octulosonate + diphosphate. It participates in nucleotide-sugar biosynthesis; CMP-3-deoxy-D-manno-octulosonate biosynthesis; CMP-3-deoxy-D-manno-octulosonate from 3-deoxy-D-manno-octulosonate and CTP: step 1/1. It functions in the pathway bacterial outer membrane biogenesis; lipopolysaccharide biosynthesis. Its function is as follows. Activates KDO (a required 8-carbon sugar) for incorporation into bacterial lipopolysaccharide in Gram-negative bacteria. The protein is 3-deoxy-manno-octulosonate cytidylyltransferase of Albidiferax ferrireducens (strain ATCC BAA-621 / DSM 15236 / T118) (Rhodoferax ferrireducens).